The primary structure comprises 1381 residues: Major capsid protein (1381 aa).

The protein belongs to the herpesviridae major capsid protein family. In terms of assembly, homomultimer. Makes the hexons and eleven out of twelve pentons. Interacts with triplex proteins 1/TRX1 and 2/TRX2; adjacent capsomers are linked together in groups of three by triplexes, heterotrimeric complexes composed of one molecule of TRX1 and two molecules of TRX2. Interacts with scaffold protein; this interaction allows efficient MCP transport to the host nucleus. Interacts with capsid vertex component 2/CVC2. Interacts with the small capsomere-interacting protein/SCP.

The protein localises to the virion. The protein resides in the host nucleus. Its function is as follows. Self-assembles to form an icosahedral capsid with a T=16 symmetry, about 200 nm in diameter, and consisting of 150 hexons and 12 pentons (total of 162 capsomers). Hexons form the edges and faces of the capsid and are each composed of six MCP molecules. In contrast, one penton is found at each of the 12 vertices. Eleven of the pentons are MCP pentamers, while the last vertex is occupied by the portal complex. The capsid is surrounded by a layer of proteinaceous material designated the tegument which, in turn, is enclosed in an envelope of host cell-derived lipids containing virus-encoded glycoproteins. The chain is Major capsid protein from Epstein-Barr virus (strain B95-8) (HHV-4).